A 315-amino-acid chain; its full sequence is DNA-directed RNA polymerase subunit alpha (315 aa).

The tract at residues 1–228 is alpha N-terminal domain (alpha-NTD); that stretch reads MLEIEKPKIE…EHFKLFMTLT (228 aa). The interval 245–315 is alpha C-terminal domain (alpha-CTD); sequence KEKVLEMTIE…LELGLKQSEE (71 aa).

Belongs to the RNA polymerase alpha chain family. In terms of assembly, homodimer. The RNAP catalytic core consists of 2 alpha, 1 beta, 1 beta' and 1 omega subunit. When a sigma factor is associated with the core the holoenzyme is formed, which can initiate transcription.

It carries out the reaction RNA(n) + a ribonucleoside 5'-triphosphate = RNA(n+1) + diphosphate. In terms of biological role, DNA-dependent RNA polymerase catalyzes the transcription of DNA into RNA using the four ribonucleoside triphosphates as substrates. In Clostridium tetani (strain Massachusetts / E88), this protein is DNA-directed RNA polymerase subunit alpha.